Here is a 223-residue protein sequence, read N- to C-terminus: Uridylate kinase (223 aa).

9–10 contacts ATP; sequence GS. A UMP-binding site is contributed by Gly43. ATP-binding residues include Gly44 and Arg48. Residues Asp65 and 112-118 each bind UMP; that span reads THPGHTT. ATP contacts are provided by Thr137, Asn138, Tyr143, and Asp146.

This sequence belongs to the UMP kinase family. As to quaternary structure, homohexamer.

It is found in the cytoplasm. It catalyses the reaction UMP + ATP = UDP + ADP. Its pathway is pyrimidine metabolism; CTP biosynthesis via de novo pathway; UDP from UMP (UMPK route): step 1/1. With respect to regulation, inhibited by UTP. In terms of biological role, catalyzes the reversible phosphorylation of UMP to UDP. This is Uridylate kinase from Methanopyrus kandleri (strain AV19 / DSM 6324 / JCM 9639 / NBRC 100938).